We begin with the raw amino-acid sequence, 289 residues long: Cyclo(L-tyrosyl-L-tyrosyl) synthase (289 aa).

The tract at residues 1-48 (MSYVAAEPGVLISPTDDLQSPRSAPAAHDENADGITGGTRDDSAPNSR) is disordered. The Nucleophile role is filled by S88. Residues N91, 229–233 (YICAE), and Y253 each bind substrate.

This sequence belongs to the CDPS family. In terms of assembly, homodimer.

It carries out the reaction 2 L-tyrosyl-tRNA(Tyr) = cyclo(L-tyrosyl-L-tyrosyl) + 2 tRNA(Tyr). Involved in the biosynthesis of mycocyclosin. It uses activated amino acids in the form of aminoacyl-tRNAs (aa-tRNAs) as substrates to catalyze the ATP-independent formation of cyclodipeptides which are intermediates in diketopiperazine (DKP) biosynthetic pathways. Catalyzes the formation of cyclo(L-Tyr-L-Tyr) (cYY) from L-tyrosyl-tRNA(Tyr). This chain is Cyclo(L-tyrosyl-L-tyrosyl) synthase, found in Mycobacterium tuberculosis (strain CDC 1551 / Oshkosh).